The following is a 914-amino-acid chain: Isoleucine--tRNA ligase (914 aa).

The 'HIGH' region motif lies at 64–74; that stretch reads PYANGNFHLGH. L-isoleucyl-5'-AMP is bound at residue glutamate 557. A 'KMSKS' region motif is present at residues 598-602; it reads AMSKS. Lysine 601 serves as a coordination point for ATP. Residues cysteine 889, cysteine 892, cysteine 906, and cysteine 909 each contribute to the Zn(2+) site.

This sequence belongs to the class-I aminoacyl-tRNA synthetase family. IleS type 1 subfamily. Monomer. Zn(2+) serves as cofactor.

The protein localises to the cytoplasm. It carries out the reaction tRNA(Ile) + L-isoleucine + ATP = L-isoleucyl-tRNA(Ile) + AMP + diphosphate. Its function is as follows. Catalyzes the attachment of isoleucine to tRNA(Ile). As IleRS can inadvertently accommodate and process structurally similar amino acids such as valine, to avoid such errors it has two additional distinct tRNA(Ile)-dependent editing activities. One activity is designated as 'pretransfer' editing and involves the hydrolysis of activated Val-AMP. The other activity is designated 'posttransfer' editing and involves deacylation of mischarged Val-tRNA(Ile). The chain is Isoleucine--tRNA ligase from Leptospira borgpetersenii serovar Hardjo-bovis (strain JB197).